The sequence spans 289 residues: ATP synthase gamma chain (289 aa).

The protein belongs to the ATPase gamma chain family. F-type ATPases have 2 components, CF(1) - the catalytic core - and CF(0) - the membrane proton channel. CF(1) has five subunits: alpha(3), beta(3), gamma(1), delta(1), epsilon(1). CF(0) has three main subunits: a, b and c.

The protein localises to the cell inner membrane. Produces ATP from ADP in the presence of a proton gradient across the membrane. The gamma chain is believed to be important in regulating ATPase activity and the flow of protons through the CF(0) complex. The polypeptide is ATP synthase gamma chain (Haemophilus influenzae (strain PittEE)).